A 161-amino-acid polypeptide reads, in one-letter code: HMG1/2-like protein (161 aa).

3 disordered regions span residues 1-46, 60-91, and 113-161; these read MKGA…KRAP, FKQK…EKAP, and GESA…DDDE. Basic and acidic residues-rich tracts occupy residues 10–27 and 77–89; these read AKAD…EKPA and AGER…ESEK. A DNA-binding region (HMG box) is located at residues 42 to 111; sequence PKRAPSAFFV…EYNKAIAAYN (70 aa). The span at 114-123 shows a compositional bias: low complexity; it reads ESAAAAAPKK. The span at 145 to 161 shows a compositional bias: acidic residues; sequence NDDDDDEGSDEDEDDDE.

It belongs to the HMGB family.

The protein localises to the nucleus. The sequence is that of HMG1/2-like protein from Triticum aestivum (Wheat).